Consider the following 166-residue polypeptide: Cyclic pyranopterin monophosphate synthase (166 aa).

Substrate contacts are provided by residues 75 to 77 and 115 to 116; these read MCH and ME. The active site involves Asp-130.

It belongs to the MoaC family. As to quaternary structure, homohexamer; trimer of dimers.

The catalysed reaction is (8S)-3',8-cyclo-7,8-dihydroguanosine 5'-triphosphate = cyclic pyranopterin phosphate + diphosphate. Its pathway is cofactor biosynthesis; molybdopterin biosynthesis. In terms of biological role, catalyzes the conversion of (8S)-3',8-cyclo-7,8-dihydroguanosine 5'-triphosphate to cyclic pyranopterin monophosphate (cPMP). The chain is Cyclic pyranopterin monophosphate synthase from Shouchella clausii (strain KSM-K16) (Alkalihalobacillus clausii).